Consider the following 121-residue polypeptide: Large ribosomal subunit protein bL12 (121 aa).

It belongs to the bacterial ribosomal protein bL12 family. In terms of assembly, homodimer. Part of the ribosomal stalk of the 50S ribosomal subunit. Forms a multimeric L10(L12)X complex, where L10 forms an elongated spine to which 2 to 4 L12 dimers bind in a sequential fashion. Binds GTP-bound translation factors.

Functionally, forms part of the ribosomal stalk which helps the ribosome interact with GTP-bound translation factors. Is thus essential for accurate translation. This Shewanella baltica (strain OS185) protein is Large ribosomal subunit protein bL12.